We begin with the raw amino-acid sequence, 137 residues long: Large ribosomal subunit protein uL16 (137 aa).

Belongs to the universal ribosomal protein uL16 family. As to quaternary structure, part of the 50S ribosomal subunit.

Functionally, binds 23S rRNA and is also seen to make contacts with the A and possibly P site tRNAs. The polypeptide is Large ribosomal subunit protein uL16 (Francisella tularensis subsp. tularensis (strain FSC 198)).